A 215-amino-acid polypeptide reads, in one-letter code: Cytochrome b6 (215 aa).

The helical transmembrane segment at 32–52 (IFYCFGGLVLTCFLIQVATGF) threads the bilayer. Cysteine 35 is a binding site for heme c. Residues histidine 86 and histidine 100 each contribute to the heme b site. 3 helical membrane passes run 90–110 (ASMM…TGGF), 116–136 (LTWV…VTGY), and 186–206 (AHTF…FLMI). Heme b-binding residues include histidine 187 and histidine 202.

The protein belongs to the cytochrome b family. PetB subfamily. In terms of assembly, the 4 large subunits of the cytochrome b6-f complex are cytochrome b6, subunit IV (17 kDa polypeptide, PetD), cytochrome f and the Rieske protein, while the 4 small subunits are PetG, PetL, PetM and PetN. The complex functions as a dimer. Heme b serves as cofactor. It depends on heme c as a cofactor.

Its subcellular location is the plastid. It is found in the chloroplast thylakoid membrane. Its function is as follows. Component of the cytochrome b6-f complex, which mediates electron transfer between photosystem II (PSII) and photosystem I (PSI), cyclic electron flow around PSI, and state transitions. This is Cytochrome b6 from Phaeodactylum tricornutum (strain CCAP 1055/1).